Reading from the N-terminus, the 355-residue chain is Protein RecA (355 aa).

An ATP-binding site is contributed by 65–72 (GPESSGKT).

This sequence belongs to the RecA family.

Its subcellular location is the cytoplasm. In terms of biological role, can catalyze the hydrolysis of ATP in the presence of single-stranded DNA, the ATP-dependent uptake of single-stranded DNA by duplex DNA, and the ATP-dependent hybridization of homologous single-stranded DNAs. It interacts with LexA causing its activation and leading to its autocatalytic cleavage. This is Protein RecA from Pseudomonas putida (Arthrobacter siderocapsulatus).